Consider the following 202-residue polypeptide: Large ribosomal subunit protein bL25 (202 aa).

The tract at residues 182–202 is disordered; that stretch reads QTAPEEEEGTAAETTEPELAE. Residues 185–202 are compositionally biased toward acidic residues; that stretch reads PEEEEGTAAETTEPELAE.

It belongs to the bacterial ribosomal protein bL25 family. CTC subfamily. Part of the 50S ribosomal subunit; part of the 5S rRNA/L5/L18/L25 subcomplex. Contacts the 5S rRNA. Binds to the 5S rRNA independently of L5 and L18.

This is one of the proteins that binds to the 5S RNA in the ribosome where it forms part of the central protuberance. The sequence is that of Large ribosomal subunit protein bL25 from Enterococcus faecalis (strain ATCC 700802 / V583).